Here is a 248-residue protein sequence, read N- to C-terminus: uncharacterized protein (248 aa).

Residues 1-23 (MLKKIVIGVTATAAFGIGAGALA) form the signal peptide.

The protein resides in the cell outer membrane. This is an uncharacterized protein from Coxiella burnetii (strain RSA 493 / Nine Mile phase I).